The primary structure comprises 436 residues: UPF0597 protein YhaM (436 aa).

The protein belongs to the UPF0597 family.

In Salmonella heidelberg (strain SL476), this protein is UPF0597 protein YhaM.